The primary structure comprises 552 residues: Urocanate hydratase (552 aa).

Residues 49-50 (GG), Gln-127, 173-175 (GMG), Asp-193, 239-240 (NA), 260-264 (QTSAH), 270-271 (YI), and Tyr-319 each bind NAD(+). Cys-407 is an active-site residue. Gly-489 provides a ligand contact to NAD(+).

The protein belongs to the urocanase family. NAD(+) is required as a cofactor.

It is found in the cytoplasm. It catalyses the reaction 4-imidazolone-5-propanoate = trans-urocanate + H2O. It functions in the pathway amino-acid degradation; L-histidine degradation into L-glutamate; N-formimidoyl-L-glutamate from L-histidine: step 2/3. Functionally, catalyzes the conversion of urocanate to 4-imidazolone-5-propionate. In Bacillus cereus (strain AH820), this protein is Urocanate hydratase.